The chain runs to 303 residues: MEASGKLRAYLELVRAHNLLGTVLGVIAGAALLGEVNVAAAIASASAAAVAAGGYAINDYFDVEIDKVNKPERPIPSGRVGAEEARKLALALLALGPLLGLAVGPLTGAYAALNAVLMYYYSKSLKKTGLPGNLAVSFSTASTLLYGSLATAEWAGEVARVLRTIPIILMVFLMTLAREVVKGVEDYVGDKEGGVKTLAVVKGPDFALRAALALACASLALAYLAAPLLSLGYAFLAFVTLGGLLSLASVAACLRSEDPVRCAAKPRRAMKVAMFLGLIGILVDRLVQPVFYPHVLHAGGEEG.

7 helical membrane passes run 23 to 43 (VLGV…AAIA), 88 to 108 (LALA…PLTG), 130 to 150 (LPGN…GSLA), 164 to 184 (TIPI…VKGV), 206 to 228 (FALR…AAPL), 232 to 254 (GYAF…AACL), and 272 to 292 (VAMF…PVFY).

This sequence belongs to the UbiA prenyltransferase family. DGGGP synthase subfamily. Mg(2+) serves as cofactor.

It is found in the cell membrane. It catalyses the reaction sn-3-O-(geranylgeranyl)glycerol 1-phosphate + (2E,6E,10E)-geranylgeranyl diphosphate = 2,3-bis-O-(geranylgeranyl)-sn-glycerol 1-phosphate + diphosphate. It participates in membrane lipid metabolism; glycerophospholipid metabolism. Functionally, prenyltransferase that catalyzes the transfer of the geranylgeranyl moiety of geranylgeranyl diphosphate (GGPP) to the C2 hydroxyl of (S)-3-O-geranylgeranylglyceryl phosphate (GGGP). This reaction is the second ether-bond-formation step in the biosynthesis of archaeal membrane lipids. This chain is Digeranylgeranylglyceryl phosphate synthase, found in Ignicoccus hospitalis (strain KIN4/I / DSM 18386 / JCM 14125).